A 124-amino-acid polypeptide reads, in one-letter code: Anamorsin homolog (124 aa).

Residues 1 to 20 (MSSPAPSTSHNAANSTQAFS) show a composition bias toward polar residues. Disordered stretches follow at residues 1 to 39 (MSSPAPSTSHNAANSTQAFSLKTRRPIDEDDLLTAEDRE) and 40 to 124 (AKST…TDDI). [2Fe-2S] cluster contacts are provided by Cys-49, Cys-56, Cys-59, and Cys-61. The fe-S binding site A stretch occupies residues 49–61 (CATRRRACKNCTC). The [4Fe-4S] cluster site is built by Cys-86, Cys-89, Cys-97, and Cys-100. Short sequence motifs (cx2C motif) lie at residues 86-89 (CGNC) and 97-100 (CAGC). The fe-S binding site B stretch occupies residues 86–100 (CGNCAKGDAFRCAGC).

The protein belongs to the anamorsin family. As to quaternary structure, monomer. The cofactor is [2Fe-2S] cluster. Requires [4Fe-4S] cluster as cofactor.

Its subcellular location is the cytoplasm. It localises to the mitochondrion intermembrane space. Functionally, component of the cytosolic iron-sulfur (Fe-S) protein assembly (CIA) machinery. Required for the maturation of extramitochondrial Fe-S proteins. Part of an electron transfer chain functioning in an early step of cytosolic Fe-S biogenesis, facilitating the de novo assembly of a [4Fe-4S] cluster on the cytosolic Fe-S scaffold complex. Electrons are transferred from NADPH via a FAD- and FMN-containing diflavin oxidoreductase. Together with the diflavin oxidoreductase, also required for the assembly of the diferric tyrosyl radical cofactor of ribonucleotide reductase (RNR), probably by providing electrons for reduction during radical cofactor maturation in the catalytic small subunit. The chain is Anamorsin homolog from Trypanosoma brucei brucei (strain 927/4 GUTat10.1).